A 415-amino-acid chain; its full sequence is Levansucrase LscA (415 aa).

5 residues coordinate sucrose: Trp45, Asp46, Ala132, Arg202, and Asp203. The active-site Nucleophile is Asp46. Residue Glu287 is the Proton donor/acceptor of the active site.

Belongs to the glycosyl hydrolase 68 family.

The protein resides in the periplasm. It catalyses the reaction [6)-beta-D-fructofuranosyl-(2-&gt;](n) alpha-D-glucopyranoside + sucrose = [6)-beta-D-fructofuranosyl-(2-&gt;](n+1) alpha-D-glucopyranoside + D-glucose. Functionally, catalyzes the synthesis of levan, a fructose polymer, by transferring the fructosyl moiety from sucrose to a growing acceptor molecule. LscA encodes a functional enzyme in vitro, when expressed in E.coli under control of the vector-based lactose promoter (Plac), and it can restore levan production to the lscB-lscC double mutant. However, lscA is not expressed in P.savastanoi pv. glycinea PG4180 under standard conditions. It could be an ancestral Lsc variant in P.syringae. The polypeptide is Levansucrase LscA (Pseudomonas savastanoi pv. glycinea (Pseudomonas syringae pv. glycinea)).